The chain runs to 98 residues: UPF0235 protein CCNA_03737 (98 aa).

Belongs to the UPF0235 family.

In Caulobacter vibrioides (strain NA1000 / CB15N) (Caulobacter crescentus), this protein is UPF0235 protein CCNA_03737.